The primary structure comprises 176 residues: NAD(P)H-quinone oxidoreductase subunit 6, chloroplastic (176 aa).

5 helical membrane-spanning segments follow: residues 10–30, 33–53, 61–81, 92–112, and 152–172; these read FLLV…VLLT, IYSA…HIPA, AQLL…VMFM, LWTV…VSLI, and FFLP…GAIA.

The protein belongs to the complex I subunit 6 family. As to quaternary structure, NDH is composed of at least 16 different subunits, 5 of which are encoded in the nucleus.

Its subcellular location is the plastid. It localises to the chloroplast thylakoid membrane. The enzyme catalyses a plastoquinone + NADH + (n+1) H(+)(in) = a plastoquinol + NAD(+) + n H(+)(out). It catalyses the reaction a plastoquinone + NADPH + (n+1) H(+)(in) = a plastoquinol + NADP(+) + n H(+)(out). Its function is as follows. NDH shuttles electrons from NAD(P)H:plastoquinone, via FMN and iron-sulfur (Fe-S) centers, to quinones in the photosynthetic chain and possibly in a chloroplast respiratory chain. The immediate electron acceptor for the enzyme in this species is believed to be plastoquinone. Couples the redox reaction to proton translocation, and thus conserves the redox energy in a proton gradient. In Nandina domestica (Heavenly bamboo), this protein is NAD(P)H-quinone oxidoreductase subunit 6, chloroplastic (ndhG).